The chain runs to 210 residues: Protein LURP-one-related 5 (210 aa).

This sequence belongs to the LOR family.

In terms of biological role, might be related to the phospholipid scramblase and tubby-like superfamily of membrane tethered transcription factors. This Arabidopsis thaliana (Mouse-ear cress) protein is Protein LURP-one-related 5.